The sequence spans 131 residues: Dihydroneopterin aldolase 2 (131 aa).

Substrate contacts are provided by residues glutamate 29, tyrosine 61, and 80–81 (LE). Lysine 107 functions as the Proton donor/acceptor in the catalytic mechanism.

It belongs to the DHNA family. In terms of assembly, homooctamer. Forms a hollow cylinder assembled from two ring-shaped tetramers. In terms of tissue distribution, expressed in roots, leaves, stems and siliques.

The enzyme catalyses 7,8-dihydroneopterin = 6-hydroxymethyl-7,8-dihydropterin + glycolaldehyde. It functions in the pathway cofactor biosynthesis; tetrahydrofolate biosynthesis; 2-amino-4-hydroxy-6-hydroxymethyl-7,8-dihydropteridine diphosphate from 7,8-dihydroneopterin triphosphate: step 3/4. Its function is as follows. Catalyzes the conversion of 7,8-dihydroneopterin into 6-hydroxymethyl-7,8-dihydropterin, a biosynthetic precursor of the vitamin tetrahydrofolate. Can use L-threo-dihydroneopterin and D-erythro-dihydroneopterin as substrates for the formation of 6-hydroxymethyldihydropterin, but it can also catalyze the epimerization of carbon 2' of dihydroneopterin and dihydromonapterin. This Arabidopsis thaliana (Mouse-ear cress) protein is Dihydroneopterin aldolase 2.